The chain runs to 996 residues: Phototropin-1 (996 aa).

The disordered stretch occupies residues 1–184; that stretch reads MEPTEKPSTK…PGGRSGIPRV (184 aa). A phosphoserine mark is found at Ser-23 and Ser-58. Polar residues predominate over residues 49-59; sequence QNLSDPRGTSP. The segment covering 60–70 has biased composition (pro residues); the sequence is QPRPQQEPAPS. The segment covering 141 to 153 has biased composition (polar residues); sequence SGGTENDPNGKKT. The segment covering 155 to 166 has biased composition (low complexity); it reads SQRNSQNSCRSS. The region spanning 184–257 is the PAS 1 domain; the sequence is VSEDLKDALS…AKIRETLAAG (74 aa). At Ser-185 the chain carries Phosphoserine. Residue Asn-233 coordinates FMN. Cys-234 is subject to S-4a-FMN cysteine. Arg-235, Gln-238, Arg-251, Asn-266, Asn-276, Gln-297, and Lys-302 together coordinate FMN. Residues 258–312 form the PAC 1 domain; sequence NNYCGRILNYKKDGTSFWNLLTIAPIKDESGKVLKFIGMQVEVSKHTEGAKEKAL. A phosphoserine mark is found at Ser-350, Ser-376, and Ser-410. Disordered stretches follow at residues 351–413 and 434–453; these read ESTN…SLSF and YGEEDDEISDRDERPESVDD. Residues 434 to 443 are compositionally biased toward acidic residues; sequence YGEEDDEISD. Residues 444 to 453 show a composition bias toward basic and acidic residues; sequence RDERPESVDD. A Phosphoserine modification is found at Ser-450. Residues 462–535 enclose the PAS 2 domain; the sequence is KGIDLATTLE…KKIRNAIDNQ (74 aa). Position 511 (Asn-511) interacts with FMN. An S-4a-FMN cysteine modification is found at Cys-512. Residues Arg-513, Gln-516, Arg-529, Asn-544, Asn-554, Phe-556, and Gln-575 each coordinate FMN. Residues 536–590 form the PAC 2 domain; sequence TEVTVQLINYTKSGKKFWNIFHLQPMRDQKGEVQYFIGVQLDGSKHVEPVRNVIE. A Protein kinase domain is found at 663 to 952; it reads FKPVKPLGSG…ANEVKQHSFF (290 aa). ATP-binding positions include 669-677 and Lys-692; that span reads LGSGDTGSV. The active-site Proton acceptor is Asp-788. The tract at residues 806–862 is activation loop; it reads DFDLSCLTSCKPQLLIPSIDEKKKKKQQKSQQTPIFMAEPMRASNSFVGTEEYIAPE.

This sequence belongs to the protein kinase superfamily. AGC Ser/Thr protein kinase family. In terms of assembly, homodimer; disulfide-linked. Interacts with PKS1, PKS2, RPT2, RPT3, PHOT2 and BLUS1. Subunit of a complex made of CAR6, PHOT1 and RPT3/NPH3. Associates with CBC1 and CBC2. Binds to BHP. Requires FMN as cofactor. Autophosphorylated at Ser-185, Ser-350 and Ser-410 in response to blue light irradiation. In terms of processing, 2 molecules of FMN bind covalently to cysteines after exposure to blue light and are reversed in the dark. As to expression, present in guard cells (at protein level).

The protein resides in the cell membrane. It localises to the cytoplasm. The catalysed reaction is L-seryl-[protein] + ATP = O-phospho-L-seryl-[protein] + ADP + H(+). The enzyme catalyses L-threonyl-[protein] + ATP = O-phospho-L-threonyl-[protein] + ADP + H(+). Autophosphorylation is inhibited by staurosporine, but not by tyrphostin 9, sphingosine, GW5074 and BML-265. In terms of biological role, protein kinase that acts as a blue light (BL) photoreceptor in a signal-transduction pathway for photo-induced movements. Triggers the phosphorylation of AHA1 and AHA2 C-terminal penultimate Thr in guard cells to activate them and induce stomatal opening in response to blue light (BL). Also phosphorylates BLUS1, a kinase involved in stomatal opening. Mediates the phosphorylation of CBC1 in stomata, but not of CBC2, in response to blue light. Required for blue light mediated mRNA destabilization. Mediates calcium spiking of extracellular origin in response to a low rate of blue light. Also mediates rapid membrane depolarization and growth inhibition in response to blue light. Necessary for root phototropism. Involved in hypocotyl phototropism under a low rate but not under a high rate of blue light. Contributes to the chloroplast accumulation but seems not to be required for chloroplast translocation. Regulates stomata opening and photomorphogenesis response of leaf tissue. Confers sensitivity to drought. Not involved in hypocotyl elongation inhibition, anthocyanin accumulation or cotyledon opening. Involved in the regulation of leaf position and morphology via the phosphorylation of ABCB19 during blue light responses to modulate auxin distribution. This is Phototropin-1 from Arabidopsis thaliana (Mouse-ear cress).